A 372-amino-acid chain; its full sequence is N-methyl-L-tryptophan oxidase (372 aa).

Position 4–34 (Asp4–His34) interacts with FAD. At Cys307 the chain carries S-8alpha-FAD cysteine.

It belongs to the MSOX/MTOX family. MTOX subfamily. In terms of assembly, monomer. FAD serves as cofactor.

The catalysed reaction is N(alpha)-methyl-L-tryptophan + O2 + H2O = L-tryptophan + formaldehyde + H2O2. In terms of biological role, catalyzes the oxidative demethylation of N-methyl-L-tryptophan. In Salmonella agona (strain SL483), this protein is N-methyl-L-tryptophan oxidase.